The sequence spans 513 residues: Serine/threonine-protein kinase PBL27 (513 aa).

Residues 1-61 (MSGCLPCFGS…KKELTAPKEG (61 aa)) form a disordered region. Residues Cys-4 and Cys-7 are each lipidated (S-palmitoyl cysteine). Composition is skewed to basic and acidic residues over residues 15 to 27 (AASK…ELSA) and 38 to 57 (ISLD…ELTA). One can recognise a Protein kinase domain in the interval 83-360 (FRPECLLGEG…GDVVTALTYL (278 aa)). ATP is bound by residues 89–97 (LGEGGFGRV) and Lys-112. Asp-210 acts as the Proton acceptor in catalysis. Ser-244 carries the phosphoserine; by CERK1 modification. Phosphothreonine; by CERK1 is present on residues Thr-245 and Thr-250. The segment covering 365–378 (FDPNAPSGQNSRSG) has biased composition (polar residues). The interval 365–513 (FDPNAPSGQN…GPGSFDSTND (149 aa)) is disordered. Ser-392 and Ser-401 each carry phosphoserine. Basic and acidic residues predominate over residues 417–428 (NSPDYRRRDMVR). A compositionally biased stretch (gly residues) spans 434–446 (SEGGSETGGGSGR). Positions 456-473 (QESQRGSPASVGRSSRGT) are enriched in polar residues. The segment covering 475-486 (RNRDLDRERAVA) has biased composition (basic and acidic residues). Positions 504 to 513 (GPGSFDSTND) are enriched in polar residues.

This sequence belongs to the protein kinase superfamily. Ser/Thr protein kinase family. As to quaternary structure, interacts with CERK1 (preferentially unphosphorylated) at the plasma membrane. Binds to MAPKKK5 at the plasma membrane; disassociation is induced by chitin perception by the CERK1 complex. Also associates with MAPKKK3. Post-translationally, phosphorylated by CERK1 upon elicitation by chitin. In terms of processing, palmitoylation at Cys-4 and Cys-7 are required for plasma membrane location.

The protein resides in the cell membrane. The catalysed reaction is L-seryl-[protein] + ATP = O-phospho-L-seryl-[protein] + ADP + H(+). It catalyses the reaction L-threonyl-[protein] + ATP = O-phospho-L-threonyl-[protein] + ADP + H(+). Its function is as follows. Receptor-like cytoplasmic kinase involved in the transduction of signal between the host cell surface chitin receptor complex CERK1-LYK5 and the intracellular MAPKKK5-dependent mitogen-activated protein kinase (MAPK) cascade that leads to chitin-induced immunity. Phosphorylates and activates MAPKKK5 when phosphorylated by CERK1 after elicitation by chitin. In Arabidopsis thaliana (Mouse-ear cress), this protein is Serine/threonine-protein kinase PBL27.